A 644-amino-acid polypeptide reads, in one-letter code: Exoribonuclease 2 (644 aa).

One can recognise an RNB domain in the interval 189-516 (RQDLTALNFV…NHRLLKAVIK (328 aa)). Positions 561–643 (NTRFAAEIID…ETRSIIARPA (83 aa)) constitute an S1 motif domain.

Belongs to the RNR ribonuclease family. RNase II subfamily.

The protein resides in the cytoplasm. It catalyses the reaction Exonucleolytic cleavage in the 3'- to 5'-direction to yield nucleoside 5'-phosphates.. Its function is as follows. Involved in mRNA degradation. Hydrolyzes single-stranded polyribonucleotides processively in the 3' to 5' direction. This Salmonella gallinarum (strain 287/91 / NCTC 13346) protein is Exoribonuclease 2.